Consider the following 385-residue polypeptide: Carbamoyl phosphate synthase small chain (385 aa).

The CPSase stretch occupies residues 1–196 (MEDALGQLAV…KLEKKKKFLF (196 aa)). The L-glutamine site is built by Ser51, Gly245, and Gly247. One can recognise a Glutamine amidotransferase type-1 domain in the interval 197-384 (HIVVYDFGVK…IKLLNQVKFS (188 aa)). Residue Cys273 is the Nucleophile of the active site. L-glutamine-binding residues include Leu274, Gln277, Asn315, and Phe318. Residues His357 and Glu359 contribute to the active site.

It belongs to the CarA family. In terms of assembly, composed of two chains; the small (or glutamine) chain promotes the hydrolysis of glutamine to ammonia, which is used by the large (or ammonia) chain to synthesize carbamoyl phosphate. Tetramer of heterodimers (alpha,beta)4.

The catalysed reaction is hydrogencarbonate + L-glutamine + 2 ATP + H2O = carbamoyl phosphate + L-glutamate + 2 ADP + phosphate + 2 H(+). The enzyme catalyses L-glutamine + H2O = L-glutamate + NH4(+). It participates in amino-acid biosynthesis; L-arginine biosynthesis; carbamoyl phosphate from bicarbonate: step 1/1. It functions in the pathway pyrimidine metabolism; UMP biosynthesis via de novo pathway; (S)-dihydroorotate from bicarbonate: step 1/3. Functionally, small subunit of the glutamine-dependent carbamoyl phosphate synthetase (CPSase). CPSase catalyzes the formation of carbamoyl phosphate from the ammonia moiety of glutamine, carbonate, and phosphate donated by ATP, constituting the first step of 2 biosynthetic pathways, one leading to arginine and/or urea and the other to pyrimidine nucleotides. The small subunit (glutamine amidotransferase) binds and cleaves glutamine to supply the large subunit with the substrate ammonia. The sequence is that of Carbamoyl phosphate synthase small chain from Buchnera aphidicola subsp. Schizaphis graminum (strain Sg).